The chain runs to 139 residues: D-ribose pyranase (139 aa).

Catalysis depends on histidine 20, which acts as the Proton donor. Substrate-binding positions include aspartate 28, histidine 106, and 128-130; that span reads FAN.

Belongs to the RbsD / FucU family. RbsD subfamily. Homodecamer.

Its subcellular location is the cytoplasm. It carries out the reaction beta-D-ribopyranose = beta-D-ribofuranose. It participates in carbohydrate metabolism; D-ribose degradation; D-ribose 5-phosphate from beta-D-ribopyranose: step 1/2. Catalyzes the interconversion of beta-pyran and beta-furan forms of D-ribose. The chain is D-ribose pyranase from Klebsiella pneumoniae (strain 342).